A 610-amino-acid polypeptide reads, in one-letter code: Menin (610 aa).

An interaction with FANCD2 region spans residues 214-390 (GVAERSWLYL…SLLEAGEERP (177 aa)). 2 disordered regions span residues 385-404 (AGEERPGEQTQGTQSQGSAL) and 460-552 (REAE…PVLT). Residues 393–402 (QTQGTQSQGS) show a composition bias toward low complexity. The segment covering 484–500 (RRESKPEEPPPPKKPAL) has biased composition (basic and acidic residues). The residue at position 487 (Ser487) is a Phosphoserine. 2 stretches are compositionally biased toward pro residues: residues 512–521 (PGPPRKPPGT) and 537–548 (VPAPAASPPPEG). Ser543 is modified (phosphoserine). Phosphothreonine is present on Thr594.

As to quaternary structure, component of the MLL-HCF complex, at least composed of KMT2A/MLL1, MEN1, ASH2L, RBBP5, DPY30, WDR5, HCFC1 and HCFC2. Component of the menin-associated histone methyltransferase complex, at least composed of KMT2B/MLL4, MEN1, ASH2L, RBBP5, DPY30 and WDR5. Interacts with POLR2B. Interacts with POLR2A phosphorylated at 'Ser-5', but not with the unphosphorylated, nor 'Ser-2' phosphorylated POLR2A forms. Interacts with FANCD2 and DBF4. Interacts with SMAD3, but not with SMAD2, nor SMAD4. Directly interacts with NFKB1, NFKB2 and RELA. Interacts with JUND (via MBM motif); inhibits the interaction of JUND with MAPK10 and the phosphorylation of JUND by MAP kinases MAPK8 and MAPK10. Interacts with KMT2A (via MBM motif). The KMT2A-MEN1 complex interacts with PSIP1 with a greater affinity as MEN1 enhances interaction of KMT2A with PSIP1.

The protein resides in the nucleus. In terms of biological role, essential component of a MLL/SET1 histone methyltransferase (HMT) complex, a complex that specifically methylates 'Lys-4' of histone H3 (H3K4). Functions as a transcriptional regulator. Binds to the TERT promoter and represses telomerase expression. Plays a role in TGFB1-mediated inhibition of cell-proliferation, possibly regulating SMAD3 transcriptional activity. Represses JUND-mediated transcriptional activation on AP1 sites, as well as that mediated by NFKB subunit RELA. Positively regulates HOXC8 and HOXC6 gene expression. May be involved in normal hematopoiesis through the activation of HOXA9 expression. May be involved in DNA repair. In Bos taurus (Bovine), this protein is Menin (MEN1).